The primary structure comprises 594 residues: ATP-dependent lipid A-core flippase (594 aa).

The next 6 membrane-spanning stretches (helical) occupy residues 35–55 (FVLA…IPKV), 64–84 (FGGS…GVAL), 135–155 (AVIF…ITLV), 161–181 (VVAL…VVAV), 262–282 (VTAF…MIQA), and 289–309 (IGGF…LKHL). Residues 36–318 (VLAIIAMGLV…LADLNQPLQR (283 aa)) form the ABC transmembrane type-1 domain. Residues 350 to 588 (LVFDNVGFRY…NGLYAGLHRI (239 aa)) enclose the ABC transporter domain. Position 384-391 (384-391 (GPSGSGKT)) interacts with ATP.

This sequence belongs to the ABC transporter superfamily. Lipid exporter (TC 3.A.1.106) family. Homodimer.

It is found in the cell inner membrane. It catalyses the reaction ATP + H2O + lipid A-core oligosaccharideSide 1 = ADP + phosphate + lipid A-core oligosaccharideSide 2.. Its function is as follows. Involved in lipopolysaccharide (LPS) biosynthesis. Translocates lipid A-core from the inner to the outer leaflet of the inner membrane. Transmembrane domains (TMD) form a pore in the inner membrane and the ATP-binding domain (NBD) is responsible for energy generation. The polypeptide is ATP-dependent lipid A-core flippase (Cupriavidus metallidurans (strain ATCC 43123 / DSM 2839 / NBRC 102507 / CH34) (Ralstonia metallidurans)).